We begin with the raw amino-acid sequence, 385 residues long: V-type proton ATPase subunit C (385 aa).

This sequence belongs to the V-ATPase C subunit family. As to quaternary structure, V-ATPase is a heteromultimeric enzyme made up of two complexes: the ATP-hydrolytic V1 complex and the proton translocation V0 complex. The V1 complex consists of three catalytic AB heterodimers that form a heterohexamer, three peripheral stalks each consisting of EG heterodimers, one central rotor including subunits D and F, and the regulatory subunits C and H. The proton translocation complex V0 consists of the proton transport subunit a, a ring of proteolipid subunits c9c'', rotary subunit d, subunits e and f, and the accessory subunits vah-19/Ac45 and vah-20/PRR. Interacts with V-type proton ATPase subunits a1 unc-32, a2 vha-5 and a3 vha-6.

It is found in the cytoplasm. The protein localises to the membrane. Its function is as follows. Subunit of the V1 complex of vacuolar(H+)-ATPase (V-ATPase), a multisubunit enzyme composed of a peripheral complex (V1) that hydrolyzes ATP and a membrane integral complex (V0) that translocates protons. V-ATPase is responsible for acidifying and maintaining the pH of intracellular compartments and in some cell types, is targeted to the plasma membrane, where it is responsible for acidifying the extracellular environment. Subunit C is necessary for the assembly of the catalytic sector of the enzyme and is likely to have a specific function in its catalytic activity. Has roles in embryogenesis and ovulation. In Caenorhabditis briggsae, this protein is V-type proton ATPase subunit C.